Here is a 353-residue protein sequence, read N- to C-terminus: Methylthioribose-1-phosphate isomerase (353 aa).

Residues 51-53, Arg94, and Gln203 each bind substrate; that span reads RGA. The Proton donor role is filled by Asp244. 254 to 255 is a binding site for substrate; that stretch reads NK.

It belongs to the eIF-2B alpha/beta/delta subunits family. MtnA subfamily.

It carries out the reaction 5-(methylsulfanyl)-alpha-D-ribose 1-phosphate = 5-(methylsulfanyl)-D-ribulose 1-phosphate. The protein operates within amino-acid biosynthesis; L-methionine biosynthesis via salvage pathway; L-methionine from S-methyl-5-thio-alpha-D-ribose 1-phosphate: step 1/6. Functionally, catalyzes the interconversion of methylthioribose-1-phosphate (MTR-1-P) into methylthioribulose-1-phosphate (MTRu-1-P). This chain is Methylthioribose-1-phosphate isomerase, found in Nostoc punctiforme (strain ATCC 29133 / PCC 73102).